Reading from the N-terminus, the 1161-residue chain is Integrin alpha-D (1161 aa).

The first 17 residues, 1–17, serve as a signal peptide directing secretion; it reads MTFGTVLLLSVLASYHG. Residues 18–1099 lie on the Extracellular side of the membrane; it reads FNLDVEEPTI…MVLEEDEVYN (1082 aa). 2 FG-GAP repeats span residues 19–76 and 77–136; these read NLDV…MCQP and IPLH…IIQT. Asparagine 59 carries an N-linked (GlcNAc...) asparagine glycan. Cysteine 67 and cysteine 74 are oxidised to a cystine. N-linked (GlcNAc...) asparagine glycans are attached at residues asparagine 87 and asparagine 99. A disulfide bridge connects residues cysteine 106 and cysteine 124. One can recognise a VWFA domain in the interval 150-332; sequence DIVFLIDGSG…SIQKQLQEKI (183 aa). FG-GAP repeat units follow at residues 339 to 390, 391 to 442, 443 to 503, 506 to 564, and 569 to 629; these read QSRA…PTFI, NMSQ…SRQW, RKKA…RVQW, DAVL…SGIS, and QRIA…FSPV. A glycan (N-linked (GlcNAc...) asparagine) is linked at asparagine 391. Ca(2+) contacts are provided by aspartate 465, aspartate 467, aspartate 469, aspartate 473, aspartate 529, asparagine 531, aspartate 533, aspartate 537, aspartate 592, aspartate 596, and aspartate 600. Cysteine 654 and cysteine 709 form a disulfide bridge. Asparagine 690 and asparagine 732 each carry an N-linked (GlcNAc...) asparagine glycan. 2 cysteine pairs are disulfide-bonded: cysteine 768–cysteine 774 and cysteine 845–cysteine 860. Residues asparagine 872 and asparagine 956 are each glycosylated (N-linked (GlcNAc...) asparagine). Disulfide bonds link cysteine 993–cysteine 1017 and cysteine 1022–cysteine 1027. Asparagine 1045 carries an N-linked (GlcNAc...) asparagine glycan. A helical transmembrane segment spans residues 1100 to 1120; it reads AIPIIMGSSVGALLLLALITA. At 1121–1161 the chain is on the cytoplasmic side; the sequence is TLYKLGFFKRHYKEMLEDKPEDTATFSGDDFSCVAPNVPLS. Positions 1126–1130 match the GFFKR motif motif; sequence GFFKR.

Belongs to the integrin alpha chain family. Heterodimer of an alpha and a beta subunit. Alpha-D associates with beta-2. In terms of tissue distribution, expressed moderately on myelomonocytic cell lines and subsets of peripheral blood leukocytes and strongly on tissue-specialized cells, including macrophages foam cells within atherosclerotic plaques, and on splenic red pulp macrophages.

It is found in the membrane. Its function is as follows. Integrin alpha-D/beta-2 is a receptor for ICAM3 and VCAM1. May play a role in the atherosclerotic process such as clearing lipoproteins from plaques and in phagocytosis of blood-borne pathogens, particulate matter, and senescent erythrocytes from the blood. In Homo sapiens (Human), this protein is Integrin alpha-D (ITGAD).